A 557-amino-acid polypeptide reads, in one-letter code: BZIP-type transcription factor MBZ1 (557 aa).

Residues 171-194 (AKAQAQQRQQQQQQQLIQQTQRQT) are compositionally biased toward low complexity. Disordered stretches follow at residues 171 to 209 (AKAQ…TDPI) and 221 to 273 (MRAK…RQLR). Residues 229-240 (EPESQSVLNNLP) are compositionally biased toward polar residues. Over residues 254–271 (RLLASEEGKKLSSKERRQ) the composition is skewed to basic and acidic residues. One can recognise a bZIP domain in the interval 264-327 (LSSKERRQLR…KRLSDLTRML (64 aa)). The segment at 267–286 (KERRQLRNKVSARAFRSRRK) is basic motif. A leucine-zipper region spans residues 289–296 (ISQLEAEI). The segment at 344-364 (PTGLPQGSPVKIEQNPQQEQN) is disordered.

It localises to the nucleus. In terms of biological role, BZIP-type transcription factor that functions as either an activator or a suppressor, and which contributes to the regulation of fungal growth, conidiation, cell wall integrity, and virulence. Plays a key role in virulence against insects by mediating cell wall integrity, cell surface hydrophobicity, and adherence to hydrophobic surfaces. Exhibits negative regulation of subtilisin proteases, but positive control of an adhesin gene. This Metarhizium robertsii (strain ARSEF 23 / ATCC MYA-3075) (Metarhizium anisopliae (strain ARSEF 23)) protein is BZIP-type transcription factor MBZ1.